Reading from the N-terminus, the 397-residue chain is Elongation factor Tu (397 aa).

The tr-type G domain occupies L10–E207. The segment at G19 to T26 is G1. G19–T26 is a binding site for GTP. T26 serves as a coordination point for Mg(2+). The interval G60 to N64 is G2. Residues D81 to G84 form a G3 region. GTP is bound by residues D81–H85 and N136–D139. The G4 stretch occupies residues N136–D139. Residues S174 to R176 are G5.

The protein belongs to the TRAFAC class translation factor GTPase superfamily. Classic translation factor GTPase family. EF-Tu/EF-1A subfamily. Monomer.

It localises to the cytoplasm. The enzyme catalyses GTP + H2O = GDP + phosphate + H(+). Functionally, GTP hydrolase that promotes the GTP-dependent binding of aminoacyl-tRNA to the A-site of ribosomes during protein biosynthesis. This is Elongation factor Tu from Pseudomonas fluorescens (strain Pf0-1).